The chain runs to 631 residues: MKNETEAVADQPPKTGPVKPGHEVIADYVRTLDMSPGVYRMLDSQSRVLYVGKARALKRRVASYAKPSGHSPRIARMIRDTASMMFLTTRTETEALLLEQNLIKQLKPKFNVLLRDDKSFPNILVSDEHAFPQIKKHRGSKKEKGSYFGPFASAGAVNRTLNQLQKVFLLRNCTDAVFESRTRPCLLYQIKRCSGPCVGHISEEDYGASVKDAVRFLKGDSTDLQRQLADGMAAASEAMEFERAAALRDRIRALTNVQSAQGINPQGVKEADVIALHMEGGQACVQVFFIRANQNWGNRDFYPRVGADIEEPEVLEAFLGQFYDQKEPPKQLLLSHPVESMDLMVDALSGKRGTKVEILVPQRGEKAELVDGARRNARESLGRKMAETQAQGKLLDGLAGAFGLDGPPKRVEVYDNSHIQGAHAVGAMIVAGPEGYLKSQYRKFNIKGGSLTPGDDFGMMKEVLTRRFARLLKEDPDRETEAWPDLLLIDGGAGQISAVKEIMDDLGVDDVPFIGVAKGIDRDQGKEEFYRPGQPVFALKRNDPVLYFVQRMRDEAHRFAIGAHRAKRSKAVSATPLDDVPGVGAGRKRALLAHFGSAKAVARANLSDLTAVDGVSEGLAQKIYDFFHDQA.

The segment at Met1–Pro20 is disordered. Residues Met34 to Val112 form the GIY-YIG domain. Residues Thr222–Val257 enclose the UVR domain.

It belongs to the UvrC family. In terms of assembly, interacts with UvrB in an incision complex.

It localises to the cytoplasm. In terms of biological role, the UvrABC repair system catalyzes the recognition and processing of DNA lesions. UvrC both incises the 5' and 3' sides of the lesion. The N-terminal half is responsible for the 3' incision and the C-terminal half is responsible for the 5' incision. This is UvrABC system protein C from Jannaschia sp. (strain CCS1).